Here is a 273-residue protein sequence, read N- to C-terminus: Undecaprenyl-diphosphatase (273 aa).

The next 7 helical transmembrane spans lie at 13–35 (GLVE…VFGN), 45–62 (VFEI…VFEY), 82–102 (FVLN…LFDK), 108–128 (LFNP…ILWV), 186–206 (TEFS…YDVL), 219–239 (LILI…KALL), and 250–270 (FAYY…SGWI).

This sequence belongs to the UppP family.

Its subcellular location is the cell inner membrane. It carries out the reaction di-trans,octa-cis-undecaprenyl diphosphate + H2O = di-trans,octa-cis-undecaprenyl phosphate + phosphate + H(+). In terms of biological role, catalyzes the dephosphorylation of undecaprenyl diphosphate (UPP). Confers resistance to bacitracin. This is Undecaprenyl-diphosphatase from Neisseria gonorrhoeae (strain ATCC 700825 / FA 1090).